Consider the following 816-residue polypeptide: Probable transcriptional regulator SLK2 (816 aa).

Disordered regions lie at residues 133–153 and 166–189; these read HDPS…SQTN and SFFQ…KQDD. 2 stretches are compositionally biased toward polar residues: residues 139-153 and 166-176; these read LGGS…SQTN and SFFQDPNNLTQ. Residues 307–554 form a dimerization region; sequence PSESSIVYWR…DQKVGPIEAL (248 aa). The Nuclear localization signal motif lies at 316–330; sequence RKFVTEYFSPRAKKR. 2 stretches are compositionally biased toward polar residues: residues 644 to 662 and 672 to 711; these read IQQE…QGTS and PSIS…SGNQ. Residues 644 to 711 form a disordered region; it reads IQQEPSRNRS…QPPSCSSGNQ (68 aa).

This sequence belongs to the adn1/SEU family. Forms corepressor complexes with LUH; LUH is the transcription repressor subunit and SLK2 the specific DNA-binding adapters. As to expression, expressed in young flower meristems, ovules and the carpel margin meristem.

The protein localises to the nucleus. Functionally, probable transcription regulator that functions in the development of the carpel margin meristem similarly to SEUSS (SEU). In association with SEU, supports organ development from meristematic regions by facilitating auxin response and thus organ initiation, and by sustaining meristematic potential through the maintenance of PHABULOSA expression. DNA-binding adapter subunit of the SEU-SLK2 transcriptional corepressor of abiotic stress (e.g. salt and osmotic stress) response genes. The chain is Probable transcriptional regulator SLK2 (SLK2) from Arabidopsis thaliana (Mouse-ear cress).